The sequence spans 765 residues: E3 ubiquitin-protein ligase SMURF2 (765 aa).

A C2 domain is found at 1-117 (MSNQGVRRNG…KDTGYQRLDL (117 aa)). 3 WW domains span residues 157–190 (NDLP…RPTR), 251–284 (PDLP…DPRV), and 297–330 (GPLP…DPRL). The segment at 341-375 (SPNGSRAAVEAQSSSRPGQLKEQAQSVVSPGNLPE) is disordered. A compositionally biased stretch (polar residues) spans 351-369 (AQSSSRPGQLKEQAQSVVS). The HECT domain occupies 431 to 765 (RPKDLWKRLM…IEETCGFAVE (335 aa)). Cys-733 serves as the catalytic Glycyl thioester intermediate.

Its subcellular location is the nucleus. The protein resides in the cytoplasm. It localises to the cell membrane. The protein localises to the membrane raft. It catalyses the reaction S-ubiquitinyl-[E2 ubiquitin-conjugating enzyme]-L-cysteine + [acceptor protein]-L-lysine = [E2 ubiquitin-conjugating enzyme]-L-cysteine + N(6)-ubiquitinyl-[acceptor protein]-L-lysine.. It participates in protein modification; protein ubiquitination. Its function is as follows. E3 ubiquitin-protein ligase which accepts ubiquitin from an E2 ubiquitin-conjugating enzyme in the form of a thioester and then directly transfers the ubiquitin to targeted substrates. In Danio rerio (Zebrafish), this protein is E3 ubiquitin-protein ligase SMURF2 (smurf2).